Here is a 142-residue protein sequence, read N- to C-terminus: Large-conductance mechanosensitive channel (142 aa).

3 helical membrane-spanning segments follow: residues 14-34 (VVDL…VNSL), 38-58 (VIMP…YYIP), and 82-102 (GQFL…FMVI).

Belongs to the MscL family. In terms of assembly, homopentamer.

It localises to the cell inner membrane. Functionally, channel that opens in response to stretch forces in the membrane lipid bilayer. May participate in the regulation of osmotic pressure changes within the cell. This chain is Large-conductance mechanosensitive channel, found in Methylorubrum populi (strain ATCC BAA-705 / NCIMB 13946 / BJ001) (Methylobacterium populi).